A 464-amino-acid chain; its full sequence is UDP-N-acetylmuramoylalanine--D-glutamate ligase (464 aa).

An ATP-binding site is contributed by 112 to 118; it reads GTDGKTT.

The protein belongs to the MurCDEF family.

The protein localises to the cytoplasm. It carries out the reaction UDP-N-acetyl-alpha-D-muramoyl-L-alanine + D-glutamate + ATP = UDP-N-acetyl-alpha-D-muramoyl-L-alanyl-D-glutamate + ADP + phosphate + H(+). It functions in the pathway cell wall biogenesis; peptidoglycan biosynthesis. Functionally, cell wall formation. Catalyzes the addition of glutamate to the nucleotide precursor UDP-N-acetylmuramoyl-L-alanine (UMA). In Pelodictyon phaeoclathratiforme (strain DSM 5477 / BU-1), this protein is UDP-N-acetylmuramoylalanine--D-glutamate ligase.